Consider the following 92-residue polypeptide: Progonadoliberin-1 (92 aa).

A signal peptide spans 1–23 (MGLIPKLLAGLVLLTLCVENGSG). A Pyrrolidone carboxylic acid modification is found at Q24. Residue G33 is modified to Glycine amide.

This sequence belongs to the GnRH family. Post-translationally, the precursor is cleaved by ACE, which removes the Gly-Lys-Arg peptide at the C-terminus, leading to mature hormone. The mature form of Gonadoliberin-1 is also cleaved and degraded by ACE.

Its subcellular location is the secreted. In terms of biological role, stimulates the secretion of gonadotropins; it stimulates the secretion of both luteinizing and follicle-stimulating hormones. The protein is Progonadoliberin-1 (GNRH1) of Cavia porcellus (Guinea pig).